Reading from the N-terminus, the 79-residue chain is Acyl carrier protein (79 aa).

The Carrier domain occupies 2-79; it reads ASKEEILAGL…QDAVDFIXGA (78 aa). S40 is subject to O-(pantetheine 4'-phosphoryl)serine.

This sequence belongs to the acyl carrier protein (ACP) family. 4'-phosphopantetheine is transferred from CoA to a specific serine of apo-ACP by AcpS. This modification is essential for activity because fatty acids are bound in thioester linkage to the sulfhydryl of the prosthetic group.

The protein localises to the cytoplasm. Its pathway is lipid metabolism; fatty acid biosynthesis. Functionally, carrier of the growing fatty acid chain in fatty acid biosynthesis. This chain is Acyl carrier protein, found in Myxococcus xanthus.